The sequence spans 100 residues: uncharacterized protein (100 aa).

One can recognise an HTH arsR-type domain in the interval 8–100; that stretch reads MKQSDDQIRA…TYLPGFLETL (93 aa). The H-T-H motif DNA-binding region spans 44-67; the sequence is CGEVGEKCNIVKTTASYHFKTLRE.

This is an uncharacterized protein from Bacillus subtilis (strain 168).